Reading from the N-terminus, the 104-residue chain is Pterin-4-alpha-carbinolamine dehydratase (104 aa).

Position 2 is an N-acetylalanine (A2). Substrate is bound by residues 61-63 (DHH) and 78-81 (STHE).

This sequence belongs to the pterin-4-alpha-carbinolamine dehydratase family. Homotetramer and homodimer. Heterotetramer with HNF1A; formed by a dimer of dimers. Interacts with HNF1B (via HNF-p1 domain); the interaction increases HNF1B transactivation activity.

The protein localises to the cytoplasm. Its subcellular location is the nucleus. It carries out the reaction (4aS,6R)-4a-hydroxy-L-erythro-5,6,7,8-tetrahydrobiopterin = (6R)-L-erythro-6,7-dihydrobiopterin + H2O. In terms of biological role, involved in tetrahydrobiopterin biosynthesis. Seems to both prevent the formation of 7-pterins and accelerate the formation of quinonoid-BH2. Coactivator for HNF1A-dependent transcription. Regulates the dimerization of homeodomain protein HNF1A and enhances its transcriptional activity. Also acts as a coactivator for HNF1B-dependent transcription. This chain is Pterin-4-alpha-carbinolamine dehydratase (PCBD1), found in Bos taurus (Bovine).